Here is a 335-residue protein sequence, read N- to C-terminus: Phosphatidylcholine-sterol acyltransferase (335 aa).

The signal sequence occupies residues 1–18; the sequence is MKKWFVCLLGLVALTVQA. The Nucleophile role is filled by Ser-34. Residues Asp-306 and His-309 contribute to the active site.

This sequence belongs to the 'GDSL' lipolytic enzyme family.

The enzyme catalyses a sterol + a 1,2-diacyl-sn-glycero-3-phosphocholine = a sterol ester + a 1-acyl-sn-glycero-3-phosphocholine. Fatty acid transfer between phosphatidylcholine and cholesterol. This chain is Phosphatidylcholine-sterol acyltransferase, found in Aeromonas hydrophila.